The following is a 649-amino-acid chain: Solute carrier family 22 member 16 (649 aa).

Residues 19–39 (FQIVLYLICAYQSLSCGIHYL) traverse the membrane as a helical segment. Asparagine 65 and asparagine 108 each carry an N-linked (GlcNAc...) asparagine glycan. 5 consecutive transmembrane segments (helical) span residues 156–176 (MIQP…SYLS), 190–210 (IGVF…SFMI), 214–234 (FLVM…MEII), 244–264 (IHLN…SYLL), and 268–288 (WLYQ…CWML). A glycan (N-linked (GlcNAc...) asparagine) is linked at asparagine 315. 6 consecutive transmembrane segments (helical) span residues 356–376 (AKMT…YYMF), 389–409 (LYLL…CIWL), 417–437 (TMLL…VMPS), 445–465 (MVAL…YLYT), 475–495 (CLAV…IPFT), and 501–521 (VWIF…GLLS). The segment covering 530-544 (TPMKSTWETTEQQVP) has biased composition (polar residues). Disordered regions lie at residues 530–560 (TPMK…SFER) and 579–649 (SPDA…LGGF).

Belongs to the major facilitator (TC 2.A.1) superfamily. Organic cation transporter (TC 2.A.1.19) family.

The protein localises to the cell membrane. It catalyses the reaction (R)-carnitine(in) = (R)-carnitine(out). The catalysed reaction is spermidine(in) = spermidine(out). Its function is as follows. Facilitative organic cation transporter that mediates the transport of carnitine as well as the polyamine spermidine. Mediates the partially Na(+)-dependent bidirectional transport of carnitine. May mediate L-carnitine secretion from testis epididymal epithelium into the lumen which is involved in the maturation of spermatozoa. The sequence is that of Solute carrier family 22 member 16 from Mus musculus (Mouse).